The primary structure comprises 324 residues: T-cell acute lymphocytic leukemia protein 1 homolog (324 aa).

Residues 1-49 are disordered; that stretch reads MMEKLKSEQFPLSPSAEGCASPPRGDGDARGKQEGTTAETGEHRLPEEL. The region spanning 185–237 is the bHLH domain; it reads VRRIFTNSRERWRQQNVNGAFAELRKLIPTHPPDKKLSKNEILRLAMKYINFL. The interval 276–324 is disordered; that stretch reads SPNSSCGSLLDGDASPESFTEDQDSSVESRPSARGLHHSSLPLDGNAQR.

Expressed in hemopoietic and endothelial lineages. Isoform beta emerges first, expressing in the entire anterior and posterior lateral mesoderm (ALM and PLM respectively), and in the ventral wall of the dorsal aorta, where definitive hemopoiesis begins. Isoform alpha expresses later as two pairs of stripes in the PLM and ALM, and becomes restricted to the intermediate cell mass (ICM) by the 18-somite stage. The ICM is the key site of primitive hemopoiesis, giving rise to the erythroid lineage. Also expressed in all stages of endocardial cell migration and in the developing midbrain, hindbrain and spinal cord. In adults, expressed in the main hemopoietic organs, namely the kidney (where isoform alpha is the predominant isoform) and the spleen. Also expressed in the liver, gill and gonads.

The protein resides in the nucleus. Functionally, transcription factor that plays a pivotal role in hemopoietic and endothelial development, acting synergistically with lmo2 and downstream of clo. Specifies mesodermal precursors to a hemangioblast cell fate. Hemangioblasts are bipotential precursors of blood and endothelium, and in the absence of hemopoietic induction cues such as gata1, tal1/scl-lmo2-induced hemangioblasts differentiate into endothelial cells. Isoform alpha and isoform beta are redundant for the initiation of primitive hemopoiesis but have distinct roles in the regulation of primitive erythroid differentiation and definitive hemopoietic stem cell specification, most likely due to differences in expression levels. Specification of definitive hemopoietic stem cells requires isoform beta. DNA binding is required for erythroid maturation, but not for its other hemopoietic functions. Endothelial roles include development of the dorsal aorta, the site of definitive hemopoiesis in the embryo. Required for angiogenesis but not angioblast specification. Has an additional role in endocardium formation during heart development. May play a role in central nervous system development. The sequence is that of T-cell acute lymphocytic leukemia protein 1 homolog from Danio rerio (Zebrafish).